A 727-amino-acid chain; its full sequence is Probable glutamate carboxypeptidase ARB_02390 (727 aa).

Residues 1–18 (MIVKSLSLLALAAATVEG) form the signal peptide. Asn60 and Asn80 each carry an N-linked (GlcNAc...) asparagine glycan. One can recognise a PA domain in the interval 158 to 296 (ATAEYVYVGR…ISQLDAQPIL (139 aa)). Arg197 lines the substrate pocket. Asn223 carries an N-linked (GlcNAc...) asparagine glycan. Positions 255-279 (FPGDPTTPGYPSRPDSPRKDKSPVV) are disordered. Thr261 and Tyr264 together coordinate Ca(2+). The interval 266-565 (SRPDSPRKDK…QFLGLLGYHL (300 aa)) is NAALADase. N-linked (GlcNAc...) asparagine glycans are attached at residues Asn310, Asn319, and Asn353. A Zn(2+)-binding site is contributed by His366. The active-site For NAALADase activity is Glu414. Glu415 lines the Zn(2+) pocket. The Ca(2+) site is built by Glu423 and Glu426. A Zn(2+)-binding site is contributed by Asp443. Substrate is bound by residues 516–518 (TGA) and Tyr530. His531 is a Zn(2+) binding site. Ser604 serves as the catalytic Charge relay system. A glycan (N-linked (GlcNAc...) asparagine) is linked at Asn614. His665 functions as the Charge relay system in the catalytic mechanism. Substrate is bound at residue 675-676 (GY). Residue Asn692 is glycosylated (N-linked (GlcNAc...) asparagine).

Belongs to the peptidase M28 family. M28B subfamily. Zn(2+) serves as cofactor.

Its subcellular location is the secreted. It carries out the reaction Release of an unsubstituted, C-terminal glutamyl residue, typically from Ac-Asp-Glu or folylpoly-gamma-glutamates.. Its function is as follows. Has both folate hydrolase and N-acetylated-alpha-linked-acidic dipeptidase (NAALADase) activity. Also exhibits a dipeptidyl-peptidase IV type activity. The protein is Probable glutamate carboxypeptidase ARB_02390 of Arthroderma benhamiae (strain ATCC MYA-4681 / CBS 112371) (Trichophyton mentagrophytes).